The primary structure comprises 409 residues: Probable plastid-lipid-associated protein 12, chloroplastic (409 aa).

A chloroplast-targeting transit peptide spans 1 to 55 (MVAVRFYAVEMSLPCLCPCPSSPISLSLCSPRFNLLNTTSRRLGLSRNCRTLRIS).

This sequence belongs to the PAP/fibrillin family.

Its subcellular location is the plastid. It is found in the chloroplast thylakoid. The sequence is that of Probable plastid-lipid-associated protein 12, chloroplastic (PAP12) from Arabidopsis thaliana (Mouse-ear cress).